The following is a 508-amino-acid chain: Glycerol kinase (508 aa).

ADP is bound at residue Thr14. The ATP site is built by Thr14, Thr15, and Ser16. Residue Thr14 coordinates sn-glycerol 3-phosphate. Arg18 lines the ADP pocket. The sn-glycerol 3-phosphate site is built by Arg84, Glu85, and Tyr136. The glycerol site is built by Arg84, Glu85, and Tyr136. His232 bears the Phosphohistidine; by HPr mark. Asp246 serves as a coordination point for sn-glycerol 3-phosphate. Residues Asp246 and Gln247 each coordinate glycerol. The ADP site is built by Thr268 and Gly311. ATP contacts are provided by Thr268, Gly311, Gln315, and Gly412. Positions 412 and 416 each coordinate ADP.

It belongs to the FGGY kinase family. In terms of assembly, homotetramer and homodimer (in equilibrium). In terms of processing, the phosphoenolpyruvate-dependent sugar phosphotransferase system (PTS), including enzyme I, and histidine-containing protein (HPr) are required for the phosphorylation, which leads to the activation of the enzyme.

It carries out the reaction glycerol + ATP = sn-glycerol 3-phosphate + ADP + H(+). The protein operates within polyol metabolism; glycerol degradation via glycerol kinase pathway; sn-glycerol 3-phosphate from glycerol: step 1/1. Activated by phosphorylation and inhibited by fructose 1,6-bisphosphate (FBP). Key enzyme in the regulation of glycerol uptake and metabolism. Catalyzes the phosphorylation of glycerol to yield sn-glycerol 3-phosphate. This chain is Glycerol kinase, found in Streptococcus pyogenes serotype M3 (strain ATCC BAA-595 / MGAS315).